Here is a 434-residue protein sequence, read N- to C-terminus: Glutamate-1-semialdehyde 2,1-aminomutase (434 aa).

Lys-266 is subject to N6-(pyridoxal phosphate)lysine.

Belongs to the class-III pyridoxal-phosphate-dependent aminotransferase family. HemL subfamily. As to quaternary structure, homodimer. It depends on pyridoxal 5'-phosphate as a cofactor.

The protein localises to the cytoplasm. It carries out the reaction (S)-4-amino-5-oxopentanoate = 5-aminolevulinate. The protein operates within porphyrin-containing compound metabolism; protoporphyrin-IX biosynthesis; 5-aminolevulinate from L-glutamyl-tRNA(Glu): step 2/2. This chain is Glutamate-1-semialdehyde 2,1-aminomutase, found in Fusobacterium nucleatum subsp. nucleatum (strain ATCC 25586 / DSM 15643 / BCRC 10681 / CIP 101130 / JCM 8532 / KCTC 2640 / LMG 13131 / VPI 4355).